Here is a 505-residue protein sequence, read N- to C-terminus: Probable folylpolyglutamate synthase (505 aa).

89 to 92 (GKGS) contributes to the ATP binding site. Positions 121, 190, and 218 each coordinate Mg(2+). The ATP site is built by arginine 332 and aspartate 346.

It belongs to the folylpolyglutamate synthase family. Requires a monovalent cation as cofactor.

Its subcellular location is the mitochondrion inner membrane. The protein localises to the mitochondrion matrix. The protein resides in the cytoplasm. It carries out the reaction (6S)-5,6,7,8-tetrahydrofolyl-(gamma-L-Glu)(n) + L-glutamate + ATP = (6S)-5,6,7,8-tetrahydrofolyl-(gamma-L-Glu)(n+1) + ADP + phosphate + H(+). The protein operates within cofactor biosynthesis; tetrahydrofolylpolyglutamate biosynthesis. In terms of biological role, catalyzes conversion of folates to polyglutamate derivatives allowing concentration of folate compounds in the cell and the intracellular retention of these cofactors, which are important substrates for most of the folate-dependent enzymes that are involved in one-carbon transfer reactions involved in purine, pyrimidine and amino acid synthesis. The protein is Probable folylpolyglutamate synthase (met7) of Schizosaccharomyces pombe (strain 972 / ATCC 24843) (Fission yeast).